A 614-amino-acid polypeptide reads, in one-letter code: Heat shock protein SSB1 (614 aa).

Residues 1–392 are nucleotide binding domain (NBD); sequence MSTEVYDGAI…ILSGKATSAE (392 aa). ATP is bound by residues 16-18, K74, 206-208, 272-279, and G343; these read TTY, GGT, and ERAKRTLS. An inter-domain linker region spans residues 393 to 403; that stretch reads TADLLLLDVVP. The segment at 404–614 is substrate binding domain (SBD); sequence LSLGVAMEGN…RAVTKAMSSR (211 aa). Residues 517-613 form a lid domain (SBDalpha) region; it reads TSEIENMISE…KRAVTKAMSS (97 aa). A Nuclear export signal motif is present at residues 575–583; the sequence is IENTMSEAM.

The protein belongs to the heat shock protein 70 family. Interacts with HAT1 in starvation conditions.

It is found in the nucleus. The protein localises to the cytoplasm. The enzyme catalyses ATP + H2O = ADP + phosphate + H(+). Functionally, chaperone that interacts with the histone acetyltransferase HAT1 and mediates its translocation from the nucleus to the cytoplasm during germination and starvation conditions. Within the cytoplasm, HAT1 regulates autophagy via acetylation of the autophagy-related proteins ATG3 and ATG9. This Pyricularia oryzae (strain 70-15 / ATCC MYA-4617 / FGSC 8958) (Rice blast fungus) protein is Heat shock protein SSB1.